A 185-amino-acid polypeptide reads, in one-letter code: ATP-dependent protease subunit HslV (185 aa).

Thr6 is an active-site residue. Residues Gly162, Cys165, and Thr168 each coordinate Na(+).

This sequence belongs to the peptidase T1B family. HslV subfamily. In terms of assembly, a double ring-shaped homohexamer of HslV is capped on each side by a ring-shaped HslU homohexamer. The assembly of the HslU/HslV complex is dependent on binding of ATP.

It localises to the cytoplasm. It carries out the reaction ATP-dependent cleavage of peptide bonds with broad specificity.. With respect to regulation, allosterically activated by HslU binding. Protease subunit of a proteasome-like degradation complex believed to be a general protein degrading machinery. In Nitratidesulfovibrio vulgaris (strain DSM 19637 / Miyazaki F) (Desulfovibrio vulgaris), this protein is ATP-dependent protease subunit HslV.